Reading from the N-terminus, the 276-residue chain is Diaminopimelate epimerase (276 aa).

Residues asparagine 13, glutamine 46, and asparagine 66 each coordinate substrate. Cysteine 75 functions as the Proton donor in the catalytic mechanism. Substrate-binding positions include 76–77 (GN), asparagine 159, asparagine 192, and 210–211 (ER). Cysteine 219 (proton acceptor) is an active-site residue. 220–221 (GS) provides a ligand contact to substrate.

It belongs to the diaminopimelate epimerase family. As to quaternary structure, homodimer.

The protein resides in the cytoplasm. The enzyme catalyses (2S,6S)-2,6-diaminopimelate = meso-2,6-diaminopimelate. It participates in amino-acid biosynthesis; L-lysine biosynthesis via DAP pathway; DL-2,6-diaminopimelate from LL-2,6-diaminopimelate: step 1/1. Functionally, catalyzes the stereoinversion of LL-2,6-diaminopimelate (L,L-DAP) to meso-diaminopimelate (meso-DAP), a precursor of L-lysine and an essential component of the bacterial peptidoglycan. The protein is Diaminopimelate epimerase of Pseudoalteromonas atlantica (strain T6c / ATCC BAA-1087).